The following is a 303-amino-acid chain: N-acetyl-D-glucosamine kinase (303 aa).

Residues 4–11 (GFDIGGTK) and 133–140 (GVGGGLVL) each bind ATP. The Zn(2+) site is built by histidine 157, cysteine 177, cysteine 179, and cysteine 184.

Belongs to the ROK (NagC/XylR) family. NagK subfamily.

The enzyme catalyses N-acetyl-D-glucosamine + ATP = N-acetyl-D-glucosamine 6-phosphate + ADP + H(+). It participates in cell wall biogenesis; peptidoglycan recycling. Functionally, catalyzes the phosphorylation of N-acetyl-D-glucosamine (GlcNAc) derived from cell-wall degradation, yielding GlcNAc-6-P. The protein is N-acetyl-D-glucosamine kinase of Salmonella dublin (strain CT_02021853).